The following is a 379-amino-acid chain: Phospholipase A1 (379 aa).

The first 20 residues, 1–20, serve as a signal peptide directing secretion; it reads MKFITAILVIFCVYLLSTAG. A propeptide spanning residues 21-73 is cleaved from the precursor; that stretch reads DSKILPLKKLPSKIFGHLKSHVDNTVKKPLKVFGHLKSHVENSVGPLRMNKLT. A disulfide bridge links Cys-76 with Cys-154. N-linked (GlcNAc...) asparagine glycosylation is present at Asn-126. Ser-204 functions as the Nucleophile in the catalytic mechanism. Asp-232 (charge relay system) is an active-site residue. Disulfide bonds link Cys-243/Cys-248 and Cys-285/Cys-291. The active-site Charge relay system is His-293.

The protein belongs to the AB hydrolase superfamily. Lipase family. Contains five disulfide bonds. As to expression, expressed by the venom gland.

Its subcellular location is the secreted. It carries out the reaction a 1,2-diacyl-sn-glycero-3-phosphocholine + H2O = a 2-acyl-sn-glycero-3-phosphocholine + a fatty acid + H(+). Functionally, catalyzes the hydrolysis of phosphatidylcholine with phospholipase A1 activity. May act as an allergen and induce hemolytic activity. The chain is Phospholipase A1 from Dinoponera quadriceps (South American ant).